The sequence spans 428 residues: UPF0229 protein YeaH (428 aa).

Positions 78–90 are enriched in basic and acidic residues; the sequence is GNDHFIQNDRIER. A disordered region spans residues 78–111; that stretch reads GNDHFIQNDRIERPQGGGGGGSGSGQGQASQDGE. Residues 92 to 103 are compositionally biased toward gly residues; the sequence is QGGGGGGSGSGQ.

It belongs to the UPF0229 family.

This Salmonella paratyphi C (strain RKS4594) protein is UPF0229 protein YeaH.